The chain runs to 147 residues: Probable WRKY transcription factor 45 (147 aa).

The segment at T21 to R52 is disordered. A DNA-binding region (WRKY) is located at residues S59 to D124. C90, C95, H119, and H121 together coordinate Zn(2+).

This sequence belongs to the WRKY group I family.

The protein localises to the nucleus. Functionally, transcription factor. Interacts specifically with the W box (5'-(T)TGAC[CT]-3'), a frequently occurring elicitor-responsive cis-acting element. The chain is Probable WRKY transcription factor 45 (WRKY45) from Arabidopsis thaliana (Mouse-ear cress).